The chain runs to 168 residues: Cell division inhibitor SulA (168 aa).

The tract at residues 106–112 (ALLTGNY) is ftsZ binding. The lon protease binding stretch occupies residues 161-168 (KIHSYLYH).

It belongs to the SulA family. As to quaternary structure, interacts with FtsZ. In terms of processing, is rapidly cleaved and degraded by the Lon protease once DNA damage is repaired.

Functionally, component of the SOS system and an inhibitor of cell division. Accumulation of SulA causes rapid cessation of cell division and the appearance of long, non-septate filaments. In the presence of GTP, binds a polymerization-competent form of FtsZ in a 1:1 ratio, thus inhibiting FtsZ polymerization and therefore preventing it from participating in the assembly of the Z ring. This mechanism prevents the premature segregation of damaged DNA to daughter cells during cell division. The protein is Cell division inhibitor SulA of Yersinia pseudotuberculosis serotype O:1b (strain IP 31758).